The sequence spans 339 residues: GTPase Obg (339 aa).

One can recognise an Obg domain in the interval 1-159 (MKFVDEAFVR…RELKLELKLL (159 aa)). An OBG-type G domain is found at 160–333 (ADVGLLGLPN…LCYDLMSFLE (174 aa)). GTP-binding positions include 166-173 (GLPNAGKS), 191-195 (FTTLY), 213-216 (DIPG), 283-286 (NKID), and 314-316 (SAI). Residues serine 173 and threonine 193 each coordinate Mg(2+).

It belongs to the TRAFAC class OBG-HflX-like GTPase superfamily. OBG GTPase family. In terms of assembly, monomer. The cofactor is Mg(2+).

The protein localises to the cytoplasm. An essential GTPase which binds GTP, GDP and possibly (p)ppGpp with moderate affinity, with high nucleotide exchange rates and a fairly low GTP hydrolysis rate. Plays a role in control of the cell cycle, stress response, ribosome biogenesis and in those bacteria that undergo differentiation, in morphogenesis control. This chain is GTPase Obg, found in Coxiella burnetii (strain RSA 331 / Henzerling II).